A 260-amino-acid chain; its full sequence is Triosephosphate isomerase (260 aa).

11–13 (NWK) is a binding site for substrate. Residue H103 is the Electrophile of the active site. Residue E175 is the Proton acceptor of the active site. Residues G181, S220, and 241-242 (GG) each bind substrate.

The protein belongs to the triosephosphate isomerase family. As to quaternary structure, homodimer.

It is found in the cytoplasm. The catalysed reaction is D-glyceraldehyde 3-phosphate = dihydroxyacetone phosphate. The protein operates within carbohydrate biosynthesis; gluconeogenesis. It participates in carbohydrate degradation; glycolysis; D-glyceraldehyde 3-phosphate from glycerone phosphate: step 1/1. Its function is as follows. Involved in the gluconeogenesis. Catalyzes stereospecifically the conversion of dihydroxyacetone phosphate (DHAP) to D-glyceraldehyde-3-phosphate (G3P). In Shewanella pealeana (strain ATCC 700345 / ANG-SQ1), this protein is Triosephosphate isomerase.